The chain runs to 217 residues: Small ribosomal subunit protein uS3 (217 aa).

One can recognise a KH type-2 domain in the interval 38–106 (IRKFVQKELA…QVHINIIEIK (69 aa)).

Belongs to the universal ribosomal protein uS3 family. Part of the 30S ribosomal subunit. Forms a tight complex with proteins S10 and S14.

In terms of biological role, binds the lower part of the 30S subunit head. Binds mRNA in the 70S ribosome, positioning it for translation. The protein is Small ribosomal subunit protein uS3 of Streptococcus gordonii (strain Challis / ATCC 35105 / BCRC 15272 / CH1 / DL1 / V288).